A 602-amino-acid polypeptide reads, in one-letter code: Major facilitator superfamily multidrug transporter mfsB (602 aa).

Helical transmembrane passes span 29-49 (FVLA…FPYV), 67-87 (LYAG…GMFW), 98-118 (PVLI…GFAP), 128-148 (ALGG…AEIV), 160-180 (IMPF…GALA), 201-221 (FLLP…VGFL), 329-349 (IVAY…IPVF), 378-398 (FMLA…FPFV), 411-431 (VLLV…LPSI), 439-459 (LALI…AILL), 468-486 (VLGS…SRAL), and 505-525 (IIAW…SFWM). The disordered stretch occupies residues 527–602 (ESEPRRDSEK…RSNPLAFAED (76 aa)). The segment covering 528 to 538 (SEPRRDSEKAG) has biased composition (basic and acidic residues).

The protein belongs to the major facilitator superfamily.

It localises to the membrane. Its function is as follows. Major facilitator superfamily transporter that may be involved in A.fumigatus adaptation to azoles such as vorizonazole. The chain is Major facilitator superfamily multidrug transporter mfsB from Aspergillus fumigatus (strain ATCC MYA-4609 / CBS 101355 / FGSC A1100 / Af293) (Neosartorya fumigata).